Here is a 369-residue protein sequence, read N- to C-terminus: Molybdenum import ATP-binding protein ModC (369 aa).

The ABC transporter domain occupies 7 to 243 (PGQAGIHARF…LDLPMAMTDD (237 aa)). Residue 41 to 48 (GQSGSGKT) coordinates ATP. In terms of domain architecture, Mop spans 304 to 369 (EGSILNVLAV…AQIKAVSLLA (66 aa)).

Belongs to the ABC transporter superfamily. Molybdate importer (TC 3.A.1.8) family. As to quaternary structure, the complex is composed of two ATP-binding proteins (ModC), two transmembrane proteins (ModB) and a solute-binding protein (ModA).

The protein resides in the cell inner membrane. The enzyme catalyses molybdate(out) + ATP + H2O = molybdate(in) + ADP + phosphate + H(+). In terms of biological role, part of the ABC transporter complex ModABC involved in molybdenum import. Responsible for energy coupling to the transport system. This chain is Molybdenum import ATP-binding protein ModC, found in Bordetella pertussis (strain Tohama I / ATCC BAA-589 / NCTC 13251).